The chain runs to 375 residues: Queuine tRNA-ribosyltransferase (375 aa).

Catalysis depends on aspartate 93, which acts as the Proton acceptor. Substrate contacts are provided by residues 93 to 97 (DSGGY), aspartate 147, glutamine 194, and glycine 221. The segment at 252 to 258 (GVGKPDD) is RNA binding. Aspartate 271 functions as the Nucleophile in the catalytic mechanism. Positions 276-280 (TRSGR) are RNA binding; important for wobble base 34 recognition. Zn(2+) is bound by residues cysteine 309, cysteine 311, cysteine 314, and histidine 340.

The protein belongs to the queuine tRNA-ribosyltransferase family. Homodimer. Within each dimer, one monomer is responsible for RNA recognition and catalysis, while the other monomer binds to the replacement base PreQ1. Zn(2+) serves as cofactor.

It catalyses the reaction 7-aminomethyl-7-carbaguanine + guanosine(34) in tRNA = 7-aminomethyl-7-carbaguanosine(34) in tRNA + guanine. The protein operates within tRNA modification; tRNA-queuosine biosynthesis. Catalyzes the base-exchange of a guanine (G) residue with the queuine precursor 7-aminomethyl-7-deazaguanine (PreQ1) at position 34 (anticodon wobble position) in tRNAs with GU(N) anticodons (tRNA-Asp, -Asn, -His and -Tyr). Catalysis occurs through a double-displacement mechanism. The nucleophile active site attacks the C1' of nucleotide 34 to detach the guanine base from the RNA, forming a covalent enzyme-RNA intermediate. The proton acceptor active site deprotonates the incoming PreQ1, allowing a nucleophilic attack on the C1' of the ribose to form the product. After dissociation, two additional enzymatic reactions on the tRNA convert PreQ1 to queuine (Q), resulting in the hypermodified nucleoside queuosine (7-(((4,5-cis-dihydroxy-2-cyclopenten-1-yl)amino)methyl)-7-deazaguanosine). The sequence is that of Queuine tRNA-ribosyltransferase from Sphingopyxis alaskensis (strain DSM 13593 / LMG 18877 / RB2256) (Sphingomonas alaskensis).